Consider the following 312-residue polypeptide: Olfactory receptor 10D3 (312 aa).

At 1–26 (MEIKNCSVVTEFILLGIPHTEGFETL) the chain is on the extracellular side. N-linked (GlcNAc...) asparagine glycosylation occurs at asparagine 5. A helical membrane pass occupies residues 27 to 47 (LFVLFLPFYACTLVGNVSILV). At 48 to 57 (AVISSTRLHT) the chain is on the cytoplasmic side. A helical transmembrane segment spans residues 58–78 (PMYFFLGNLSVFDMGFSSVTC). Residues 79-97 (PKMLFYLMGLSRLISYQDC) lie on the Extracellular side of the membrane. Cysteine 97 and cysteine 179 are disulfide-bonded. The chain crosses the membrane as a helical span at residues 98 to 118 (VSQLFFFHFLGSIECFLYTVM). The Cytoplasmic portion of the chain corresponds to 119-139 (AYDRFAAICHPLRYSVIMNSK). A helical membrane pass occupies residues 140–160 (ICVALAVGTWLLGCFHSSVLT). At 161-197 (SLTFTLPYCGPNEVDHFFCDIPAILPLASADTSLAQR) the chain is on the extracellular side. Residues 198–218 (VSFTNVGLVSLVCFLLILLSY) form a helical membrane-spanning segment. At 219 to 239 (TRITISILSIQSTEGRQRAFS) the chain is on the cytoplasmic side. Residues 240–260 (TCSAHLIAILCAYGPIITIYL) form a helical membrane-spanning segment. The Extracellular portion of the chain corresponds to 261 to 266 (QPTPNP). A helical membrane pass occupies residues 267-287 (MLGTVVQILMNLVGPMLNPLI). Residues 288–312 (YTLRNKEVKIALKKILHGKGSVSEG) lie on the Cytoplasmic side of the membrane.

The protein belongs to the G-protein coupled receptor 1 family.

The protein resides in the cell membrane. Functionally, potential odorant receptor. The sequence is that of Olfactory receptor 10D3 from Mus musculus (Mouse).